The chain runs to 298 residues: MGSNLKEIRKKITSVKNTQKTTKAMKLVSTSKLKKAEEMAKRSRVYAERITAVFQEIKAKIEQNGFSGLESPYFTAGEDREVKMVDIVFVTADKGLCGGFNSTTIKEVTRLMAEYKSQNVKVRLRAIGKKGISFFGFNEVELLDKVSDLSATPDYERAAEFVNKATTDFINGVTDKVILVHNGFKNMISQELKVQDLLPIKADAIEAKESLGMMEVEPSEQEREILDQLAKKYIEFNMYYALIDSLAAEHSARMQAMDAASNNAGELVKSLTIAYNKARQEAITTELVEINTGVESMK.

It belongs to the ATPase gamma chain family. F-type ATPases have 2 components, CF(1) - the catalytic core - and CF(0) - the membrane proton channel. CF(1) has five subunits: alpha(3), beta(3), gamma(1), delta(1), epsilon(1). CF(0) has three main subunits: a, b and c.

It is found in the cell inner membrane. Functionally, produces ATP from ADP in the presence of a proton gradient across the membrane. The gamma chain is believed to be important in regulating ATPase activity and the flow of protons through the CF(0) complex. This chain is ATP synthase gamma chain, found in Wolinella succinogenes (strain ATCC 29543 / DSM 1740 / CCUG 13145 / JCM 31913 / LMG 7466 / NCTC 11488 / FDC 602W) (Vibrio succinogenes).